The following is a 472-amino-acid chain: Eukaryotic translation initiation factor 2 subunit 3, X-linked (472 aa).

Alanine 2 bears the N-acetylalanine mark. Serine 16 bears the Phosphoserine mark. The region spanning glutamine 39–arginine 248 is the tr-type G domain. The interval glycine 48–serine 55 is G1. GTP is bound at residue alanine 51 to threonine 56. The tract at residues asparagine 76–lysine 80 is G2. The segment at aspartate 134–glycine 137 is G3. Residues asparagine 190 to aspartate 193 and serine 225 to glutamine 227 contribute to the GTP site. Residues asparagine 190 to aspartate 193 are G4. Residues serine 225–glutamine 227 form a G5 region. Positions glycine 457–valine 469 are interacts with Cdc123.

It belongs to the TRAFAC class translation factor GTPase superfamily. Classic translation factor GTPase family. EIF2G subfamily. In terms of assembly, eukaryotic translation initiation factor 2 eIF2 is a heterotrimeric complex composed of an alpha (EIF2S1), a beta (EIF2S2) and a gamma (EIF2S3) chain. eIF2 is member of the 43S pre-initiation complex (43S PIC). Interacts (via C-terminus) with CDC123; the interaction is direct. Widely expressed. In the brain, high mRNA levels are observed in specific regions, including the habenula, anterodorsal thalamic nucleus, hippocampus, hypothalamus, and cerebellum. Also expressed in the embryonic brain. There is a differential expression between males and females, which is tissue-specific. Females tend to have higher expression levels than males in the brain (cortex, hippocampus and paraventricular nucleus, but not in the habenula), as well as in other tissues. The up-regulation observed in females at the mRNA level may be due to the presence of 2 active copies of the gene.

It localises to the cytoplasm. It is found in the cytosol. It catalyses the reaction GTP + H2O = GDP + phosphate + H(+). Its function is as follows. Member of the eIF2 complex that functions in the early steps of protein synthesis by forming a ternary complex with GTP and initiator tRNA. This complex binds to a 40S ribosomal subunit, followed by mRNA binding to form the 43S pre-initiation complex (43S PIC). Junction of the 60S ribosomal subunit to form the 80S initiation complex is preceded by hydrolysis of the GTP bound to eIF2 and release of an eIF2-GDP binary complex. In order for eIF2 to recycle and catalyze another round of initiation, the GDP bound to eIF2 must exchange with GTP by way of a reaction catalyzed by eIF-2B. Along with its paralog on chromosome Y, may contribute to spermatogenesis up to the round spermatid stage. In Mus musculus (Mouse), this protein is Eukaryotic translation initiation factor 2 subunit 3, X-linked (Eif2s3x).